Here is a 51-residue protein sequence, read N- to C-terminus: MRMKKCPNCKNYTLNTICQCGEKTITVKPPRYSPTDKYGKYRRMLKKSIKQ.

Belongs to the NOP10 family.

In terms of biological role, involved in ribosome biogenesis; more specifically in 18S rRNA pseudouridylation and in cleavage of pre-rRNA. The chain is Ribosome biogenesis protein Nop10 from Methanococcus aeolicus (strain ATCC BAA-1280 / DSM 17508 / OCM 812 / Nankai-3).